The sequence spans 169 residues: uncharacterized protein (169 aa).

A run of 3 helical transmembrane segments spans residues 25-45 (ALMG…MSYF), 57-77 (FFWV…FGVF), and 91-111 (LFLI…FLMV).

Belongs to the major facilitator superfamily. Allantoate permease family.

It is found in the membrane. This is an uncharacterized protein from Saccharomyces cerevisiae (strain ATCC 204508 / S288c) (Baker's yeast).